The primary structure comprises 810 residues: Phenylalanine--tRNA ligase beta subunit (810 aa).

One can recognise a tRNA-binding domain in the interval 39–151; sequence RTWAAGVVVG…AGLQAGQPVG (113 aa). The B5 domain maps to 408 to 494; sequence EPEHSITLRL…RLYGYDNFGE (87 aa). Mg(2+) is bound by residues Asp-472, Asp-478, Glu-481, and Glu-482. The FDX-ACB domain occupies 716 to 809; the sequence is SSFPASDRDL…LVERFRVTLR (94 aa).

This sequence belongs to the phenylalanyl-tRNA synthetase beta subunit family. Type 1 subfamily. In terms of assembly, tetramer of two alpha and two beta subunits. It depends on Mg(2+) as a cofactor.

The protein resides in the cytoplasm. The catalysed reaction is tRNA(Phe) + L-phenylalanine + ATP = L-phenylalanyl-tRNA(Phe) + AMP + diphosphate + H(+). The chain is Phenylalanine--tRNA ligase beta subunit (pheT) from Synechococcus elongatus (strain ATCC 33912 / PCC 7942 / FACHB-805) (Anacystis nidulans R2).